The following is a 2812-amino-acid chain: Polyunsaturated fatty acid synthase subunit A (2812 aa).

Positions 12–472 (DTRIAVIGMS…GANYHAVLEE (461 aa)) constitute a Ketosynthase family 3 (KS3) domain. Catalysis depends on for beta-ketoacyl synthase activity residues cysteine 213, histidine 348, and histidine 390. Residues 602–913 (LFSGQGAQYT…TVSVNPASGK (312 aa)) enclose the Malonyl-CoA:ACP transacylase (MAT) domain. The stretch at 1000–1048 (DEEAKREAARLQKQLEDAQRQLDEAKRAADEANQKLAAAKEEAKSAAAS) forms a coiled coil. 3 Carrier domains span residues 1114–1193 (ALLA…KAEI), 1232–1308 (ERAE…KAEI), and 1342–1418 (AKAE…KAEI). Residues serine 1152, serine 1267, and serine 1377 each carry the O-(pantetheine 4'-phosphoryl)serine modification. The segment at 1422 to 1442 (SAPAPAAAAPAPAAPAPAAAA) is disordered. The span at 1423–1442 (APAPAAAAPAPAAPAPAAAA) shows a compositional bias: low complexity. The region spanning 1455-1531 (AKAETVVMEV…EVVDAMKAEI (77 aa)) is the Carrier 4 domain. Residue serine 1490 is modified to O-(pantetheine 4'-phosphoryl)serine. The disordered stretch occupies residues 1535–1555 (SAPAPAAAAPAPAAPAPAAAA). Residues 1536 to 1555 (APAPAAAAPAPAAPAPAAAA) are compositionally biased toward low complexity. Carrier domains are found at residues 1568 to 1644 (AKAE…KAEI), 1681 to 1757 (AKAE…KAEI), 1792 to 1868 (AKAE…KAEI), and 1903 to 1979 (AKAE…KAEI). 4 positions are modified to O-(pantetheine 4'-phosphoryl)serine: serine 1603, serine 1716, serine 1827, and serine 1938. Residues 2257–2484 (VVSGGARGIT…VKSICFGPWD (228 aa)) enclose the Ketoreductase (KR) domain. Positions 2524 to 2651 (EILVGNWRTP…RAVVVLSSQG (128 aa)) are N-terminal hotdog fold. The region spanning 2524–2812 (EILVGNWRTP…SVIATDSLAF (289 aa)) is the PKS/mFAS DH domain. The interval 2540 to 2800 (ETITLHRKIS…NEQGDLFIDV (261 aa)) is dehydratase (DH) domain. Residue histidine 2559 is the Proton acceptor; for dehydratase activity of the active site. The segment at 2666 to 2812 (ADPAAQSAVY…SVIATDSLAF (147 aa)) is C-terminal hotdog fold. Aspartate 2730 acts as the Proton donor; for dehydratase activity in catalysis.

As to quaternary structure, component of the polyunsaturated fatty acid synthase complex composed of at least ORF-A, ORF-B and ORF-C. Requires pantetheine 4'-phosphate as cofactor.

It participates in lipid metabolism; fatty acid biosynthesis. Functionally, poliketide synthase-like protein; part of the polyunsaturated fatty acid synthase composed of the 3 PKS-like subunits A, B and C. While the saturated fatty acids (SFAs) in Thraustochytrium are produced by the conventional fatty acid synthase (FAS) pathway, polyunsaturated fatty acids (PUFAs) including docosahexeanoic acid (DHA) and docosapentaenoic acid (DPA) are synthesized via an anaerobical PKS pathway. PUFA synthase assimilates fatty acyl-CoA, the product of FAS, as the starter unit to synthesize DPA, and this starter unit may be butyryl-CoA, hexanoyl-CoA, or octanoyl-CoA. DPA and DHA biosynthesis seem to differ by the reduction at the N-3 position by PUFA synthase, not the extension of carbon chain. In DHA biosynthesis, PUFA synthase extends the fatty acyl chain from the methyl toward the carboxyl end, and the double bond is formed when the carbon chain is growing, instead of afterward. Therefore, PUFA synthase is unable to transform DPA to DHA, suggesting that DPA is not the precursor of DHA. Moreover, DPA molecule is partly extended by FAS KS domain, so DPA biosynthesis is less dependent on PUFA synthase KS domain than DHA. In Thraustochytrium sp. (strain ATCC 26185 / S-3), this protein is Polyunsaturated fatty acid synthase subunit A.